The chain runs to 147 residues: Cyanate hydratase (147 aa).

Catalysis depends on residues Arg88, Glu91, and Ser114.

It belongs to the cyanase family.

It catalyses the reaction cyanate + hydrogencarbonate + 3 H(+) = NH4(+) + 2 CO2. In terms of biological role, catalyzes the reaction of cyanate with bicarbonate to produce ammonia and carbon dioxide. The protein is Cyanate hydratase of Dechloromonas aromatica (strain RCB).